The sequence spans 100 residues: NADH-quinone oxidoreductase subunit K (100 aa).

A run of 3 helical transmembrane segments spans residues 4–24 (LSYS…GIMI), 29–49 (LFLL…FVIV), and 60–80 (VMYI…LALL).

The protein belongs to the complex I subunit 4L family. As to quaternary structure, NDH-1 is composed of 14 different subunits. Subunits NuoA, H, J, K, L, M, N constitute the membrane sector of the complex.

Its subcellular location is the cell membrane. The enzyme catalyses a quinone + NADH + 5 H(+)(in) = a quinol + NAD(+) + 4 H(+)(out). NDH-1 shuttles electrons from NADH, via FMN and iron-sulfur (Fe-S) centers, to quinones in the respiratory chain. The immediate electron acceptor for the enzyme in this species is believed to be ubiquinone. Couples the redox reaction to proton translocation (for every two electrons transferred, four hydrogen ions are translocated across the cytoplasmic membrane), and thus conserves the redox energy in a proton gradient. The sequence is that of NADH-quinone oxidoreductase subunit K from Baumannia cicadellinicola subsp. Homalodisca coagulata.